The chain runs to 382 residues: Mucosal addressin cell adhesion molecule 1 (382 aa).

The first 18 residues, 1 to 18 (MDFGLALLLAGLLGLLLG), serve as a signal peptide directing secretion. The Extracellular portion of the chain corresponds to 19-317 (QSLQVKPLQV…TGSSKPAGDQ (299 aa)). Ig-like domains follow at residues 23 to 112 (VKPL…LLVY) and 113 to 231 (AFPD…TSPE). 3 cysteine pairs are disulfide-bonded: C47–C94, C51–C98, and C134–C204. N83 carries an N-linked (GlcNAc...) asparagine glycan. The tract at residues 223–314 (VLHSPTSPEP…VIPTGSSKPA (92 aa)) is disordered. The mucin-like stretch occupies residues 226–317 (SPTSPEPPDT…TGSSKPAGDQ (92 aa)). The 1; truncated repeat unit spans residues 228–231 (TSPE). The interval 228–271 (TSPEPPDTTSPESPDTTSPESPDTTSQEPPDTTSPEPPDKTSPE) is 5.5 X 8 AA tandem repeats of [PS]-P-D-T-T-S-[QP]-E. 5 consecutive repeat copies span residues 232–239 (PPDTTSPE), 240–247 (SPDTTSPE), 248–255 (SPDTTSQE), 256–263 (PPDTTSPE), and 264–271 (PPDKTSPE). Over residues 236–261 (TSPESPDTTSPESPDTTSQEPPDTTS) the composition is skewed to low complexity. A compositionally biased stretch (low complexity) spans 277-288 (GSTHTPRSPGST). A helical transmembrane segment spans residues 318 to 338 (LPAALWTSSAVLGLLLLALPT). The Cytoplasmic segment spans residues 339–382 (YHLWKRCRHLAEDDTHPPASLRLLPQVSAWAGLRGTGQVGISPS).

As to quaternary structure, homodimer. The Ser/Thr-rich mucin-like domain may provide possible sites for O-glycosylation. Highly expressed on high endothelial venules (HEV) and lamina propia venules found in the small intestine, and to a lesser extent in the colon and spleen. Very low levels of expression found in pancreas and brain. Not expressed in the thymus, prostate, ovaries, testis, heart, placenta, lung, liver, skeletal muscle, kidney or peripheral blood leukocytes.

It localises to the membrane. Cell adhesion leukocyte receptor expressed by mucosal venules, helps to direct lymphocyte traffic into mucosal tissues including the Peyer patches and the intestinal lamina propria. It can bind both integrin alpha-4/beta-7 and L-selectin, regulating both the passage and retention of leukocytes. Isoform 2, lacking the mucin-like domain, may be specialized in supporting integrin alpha-4/beta-7-dependent adhesion strengthening, independent of L-selectin binding. This is Mucosal addressin cell adhesion molecule 1 (MADCAM1) from Homo sapiens (Human).